The primary structure comprises 136 residues: MSIIKEFREFAMRGNVVDLAVGVIIGAAFGKIVSSLVADIIMPPLGLLIGGIDFKQFAVTLREAQGDIPAVVMHYGVFIQNVFDFLIVAFAIFMAIKLINKLNRKKEEPAAAPAPTKEEVLLTEIRDLLKEQNNRS.

2 helical membrane-spanning segments follow: residues 10-30 (FAMR…AAFG) and 76-96 (GVFI…FMAI).

The protein belongs to the MscL family. Homopentamer.

The protein resides in the cell inner membrane. Its function is as follows. Channel that opens in response to stretch forces in the membrane lipid bilayer. May participate in the regulation of osmotic pressure changes within the cell. This is Large-conductance mechanosensitive channel from Escherichia coli O127:H6 (strain E2348/69 / EPEC).